The following is a 477-amino-acid chain: UDP-N-acetylglucosamine pyrophosphorylase (477 aa).

The short motif at 109–112 (MAGG) is the Substrate binding element. UTP contacts are provided by residues 109-112 (MAGG), lysine 123, and glutamine 194. A Phosphoserine modification is found at serine 218. Residue glycine 221 coordinates UTP. Asparagine 222 provides a ligand contact to substrate. Aspartate 252 serves as a coordination point for UTP. The Substrate binding signature appears at 302 to 303 (EY). Lysine 377 provides a ligand contact to UTP. Lysine 409 is a binding site for substrate. Serine 461 is subject to Phosphoserine.

This sequence belongs to the UDPGP type 1 family.

It is found in the cytoplasm. It carries out the reaction N-acetyl-alpha-D-glucosamine 1-phosphate + UTP + H(+) = UDP-N-acetyl-alpha-D-glucosamine + diphosphate. It functions in the pathway nucleotide-sugar biosynthesis; UDP-N-acetyl-alpha-D-glucosamine biosynthesis; UDP-N-acetyl-alpha-D-glucosamine from N-acetyl-alpha-D-glucosamine 1-phosphate: step 1/1. Its function is as follows. UDP-N-acetylglucosamine pyrophosphorylase that utilizes N-acetylglucosamine-1-phosphate as substrate. Together with AGM1, is involved in the production of UDP-N-acetylglucosamine from N-acetylglucosamine-6-phosphate. This chain is UDP-N-acetylglucosamine pyrophosphorylase (QRI1), found in Saccharomyces cerevisiae (strain ATCC 204508 / S288c) (Baker's yeast).